The chain runs to 316 residues: uncharacterized protein (316 aa).

The helical transmembrane segment at 12-34 threads the bilayer; it reads RWVCLTSVILFCFCIAVMRYGGV.

Its subcellular location is the membrane. This is an uncharacterized protein from Treponema pallidum (strain Nichols).